The chain runs to 494 residues: MSNYFNTLNLREQLDQLGRCRFMDREEFATEADYLKGKKVVIVGCGAQGLNQGLNMRDSGLDVAYALRQAAIDEQRQSYKNAKENGFEVASYETLIPQADLVINLTPDKQHTNVVETVMPLMKEGAALGYSHGFNVVEEGMQIRKDLTVVMVAPKCPGTEVREEYKRGFGVPTLIAVHPENDPKGEGWDIAKAWAAGTGGHRAGCLESSFVAEVKSDLMGEQTILCGMLQAGSIVSYEKMIADGIEPGYAGKLLQYGWETITEALKFGGVTHMMDRLSNPAKVKAFELSEELKELMRPLYNKHMDDIISGEFSRTMMADWANDDVNLFGWREETGQTAFENYPESDVEISEQEYFDNGILLVAMVRAGVELAFEAMTASGIIDESAYYESLHELPLIANTVARKRLYEMNVVISDTAEYGNYLFANVATPLLREKFMPSVETDVIGRGLGEASNQVDNATLIAVNDAIRNHPVEYIGEELRSYMSDMKRIAVGG.

Residues 14–208 (LDQLGRCRFM…GGHRAGCLES (195 aa)) enclose the KARI N-terminal Rossmann domain. Residues 45-48 (CGAQ), R68, R76, S78, and 108-110 (DKQ) contribute to the NADP(+) site. Residue H132 is part of the active site. An NADP(+)-binding site is contributed by G158. KARI C-terminal knotted domains follow at residues 209–344 (SFVA…NYPE) and 345–487 (SDVE…MSDM). 4 residues coordinate Mg(2+): D217, E221, E389, and E393. Residue S414 coordinates substrate.

It belongs to the ketol-acid reductoisomerase family. Requires Mg(2+) as cofactor.

The catalysed reaction is (2R)-2,3-dihydroxy-3-methylbutanoate + NADP(+) = (2S)-2-acetolactate + NADPH + H(+). It carries out the reaction (2R,3R)-2,3-dihydroxy-3-methylpentanoate + NADP(+) = (S)-2-ethyl-2-hydroxy-3-oxobutanoate + NADPH + H(+). Its pathway is amino-acid biosynthesis; L-isoleucine biosynthesis; L-isoleucine from 2-oxobutanoate: step 2/4. It functions in the pathway amino-acid biosynthesis; L-valine biosynthesis; L-valine from pyruvate: step 2/4. In terms of biological role, involved in the biosynthesis of branched-chain amino acids (BCAA). Catalyzes an alkyl-migration followed by a ketol-acid reduction of (S)-2-acetolactate (S2AL) to yield (R)-2,3-dihydroxy-isovalerate. In the isomerase reaction, S2AL is rearranged via a Mg-dependent methyl migration to produce 3-hydroxy-3-methyl-2-ketobutyrate (HMKB). In the reductase reaction, this 2-ketoacid undergoes a metal-dependent reduction by NADPH to yield (R)-2,3-dihydroxy-isovalerate. In Aliivibrio fischeri (strain ATCC 700601 / ES114) (Vibrio fischeri), this protein is Ketol-acid reductoisomerase (NADP(+)).